A 501-amino-acid polypeptide reads, in one-letter code: Phenylalanine--tRNA ligase alpha subunit (501 aa).

Thr-340 and Phe-423 together coordinate L-phenylalanine. Mg(2+) is bound at residue Glu-425. Phe-448 lines the L-phenylalanine pocket.

This sequence belongs to the class-II aminoacyl-tRNA synthetase family. Phe-tRNA synthetase alpha subunit type 2 subfamily. Tetramer of two alpha and two beta subunits. Mg(2+) is required as a cofactor.

The protein localises to the cytoplasm. The enzyme catalyses tRNA(Phe) + L-phenylalanine + ATP = L-phenylalanyl-tRNA(Phe) + AMP + diphosphate + H(+). In Methanococcus maripaludis (strain C7 / ATCC BAA-1331), this protein is Phenylalanine--tRNA ligase alpha subunit.